Consider the following 314-residue polypeptide: Methionyl-tRNA formyltransferase (314 aa).

109–112 (SLLP) contacts (6S)-5,6,7,8-tetrahydrofolate.

The protein belongs to the Fmt family.

It catalyses the reaction L-methionyl-tRNA(fMet) + (6R)-10-formyltetrahydrofolate = N-formyl-L-methionyl-tRNA(fMet) + (6S)-5,6,7,8-tetrahydrofolate + H(+). In terms of biological role, attaches a formyl group to the free amino group of methionyl-tRNA(fMet). The formyl group appears to play a dual role in the initiator identity of N-formylmethionyl-tRNA by promoting its recognition by IF2 and preventing the misappropriation of this tRNA by the elongation apparatus. The chain is Methionyl-tRNA formyltransferase from Syntrophomonas wolfei subsp. wolfei (strain DSM 2245B / Goettingen).